Consider the following 136-residue polypeptide: Aspartate 1-decarboxylase (136 aa).

Residue Ser25 is the Schiff-base intermediate with substrate; via pyruvic acid of the active site. Ser25 bears the Pyruvic acid (Ser) mark. Substrate is bound at residue Thr57. Residue Tyr58 is the Proton donor of the active site. 73–75 contacts substrate; that stretch reads GAA.

This sequence belongs to the PanD family. As to quaternary structure, heterooctamer of four alpha and four beta subunits. It depends on pyruvate as a cofactor. Is synthesized initially as an inactive proenzyme, which is activated by self-cleavage at a specific serine bond to produce a beta-subunit with a hydroxyl group at its C-terminus and an alpha-subunit with a pyruvoyl group at its N-terminus.

Its subcellular location is the cytoplasm. The enzyme catalyses L-aspartate + H(+) = beta-alanine + CO2. Its pathway is cofactor biosynthesis; (R)-pantothenate biosynthesis; beta-alanine from L-aspartate: step 1/1. Its function is as follows. Catalyzes the pyruvoyl-dependent decarboxylation of aspartate to produce beta-alanine. The protein is Aspartate 1-decarboxylase of Acidothermus cellulolyticus (strain ATCC 43068 / DSM 8971 / 11B).